Here is a 113-residue protein sequence, read N- to C-terminus: Protein ZEO1 (113 aa).

A compositionally biased stretch (polar residues) spans 1–16 (MSEIQNKAETAAQDVQ). Positions 1-96 (MSEIQNKAET…AVSEKKETKK (96 aa)) are disordered. Ser2 carries the post-translational modification N-acetylserine. Ser2 carries the post-translational modification Phosphoserine. A coiled-coil region spans residues 2–97 (SEIQNKAETA…VSEKKETKKE (96 aa)). Over residues 17 to 37 (QKLEETKESLQNKGQEVKEQA) the composition is skewed to basic and acidic residues. Glycyl lysine isopeptide (Lys-Gly) (interchain with G-Cter in ubiquitin) cross-links involve residues Lys18 and Lys23. The residue at position 25 (Ser25) is a Phosphoserine. Residues Lys29 and Lys34 each participate in a glycyl lysine isopeptide (Lys-Gly) (interchain with G-Cter in ubiquitin) cross-link. A Phosphoserine modification is found at Ser40. A Glycyl lysine isopeptide (Lys-Gly) (interchain with G-Cter in ubiquitin) cross-link involves residue Lys45. A Phosphothreonine modification is found at Thr49. Basic and acidic residues predominate over residues 53–82 (EQVKKEEQNIADGVEQKKTEAANKVEETKK). Glycyl lysine isopeptide (Lys-Gly) (interchain with G-Cter in ubiquitin) cross-links involve residues Lys57 and Lys82.

As to quaternary structure, interacts with MID2. Post-translationally, phosphorylation of Ser-25 is induced 2-fold in response to mating pheromone.

The protein localises to the cell membrane. Its function is as follows. Acts antagonistically to MID2 in signaling cell wall stress to the PKC1-MPK1 cell integrity pathway. The sequence is that of Protein ZEO1 (ZEO1) from Saccharomyces cerevisiae (strain ATCC 204508 / S288c) (Baker's yeast).